The sequence spans 305 residues: Heat stress transcription factor B-4d (305 aa).

The interval 201–230 (LRRRNSLLLSELAHMRKLYNDIIYFLQNHV) is hydrophobic repeat HR-A/B. Positions 286-289 (KKRR) match the Nuclear localization signal motif. The interval 286-305 (KKRRVQLVQEDEGDEQGSEG) is disordered. Residues 294 to 305 (QEDEGDEQGSEG) are compositionally biased toward acidic residues.

Belongs to the HSF family. Class B subfamily. In terms of assembly, homotrimer. Exhibits temperature-dependent phosphorylation.

It is found in the nucleus. Functionally, transcriptional regulator that specifically binds DNA of heat shock promoter elements (HSE). In Oryza sativa subsp. japonica (Rice), this protein is Heat stress transcription factor B-4d (HSFB4D).